A 440-amino-acid polypeptide reads, in one-letter code: Virion host shutoff protein (440 aa).

2 disordered regions span residues 98–144 (NIDH…RRKT) and 265–312 (IDEP…AGPG). Positions 266 to 281 (DEPPAASEESSASDQQ) are enriched in low complexity.

This sequence belongs to the herpesviridae VHS protein family.

It is found in the virion. Minor structural protein that acts as an endoribonuclease during lytic infection. Degrades host mRNAs in the cytoplasm by cutting them at preferred sites, including some in regions of translation initiation. The protein is Virion host shutoff protein (UL41) of Amazona oratrix (yellow-headed parrot).